Here is a 258-residue protein sequence, read N- to C-terminus: Phosphate import ATP-binding protein PstB (258 aa).

One can recognise an ABC transporter domain in the interval 12-253 (LEVKNLNFYY…PARKETEDYI (242 aa)). An ATP-binding site is contributed by 44–51 (GPSGCGKS).

This sequence belongs to the ABC transporter superfamily. Phosphate importer (TC 3.A.1.7) family. The complex is composed of two ATP-binding proteins (PstB), two transmembrane proteins (PstC and PstA) and a solute-binding protein (PstS).

The protein localises to the cell inner membrane. The catalysed reaction is phosphate(out) + ATP + H2O = ADP + 2 phosphate(in) + H(+). Its function is as follows. Part of the ABC transporter complex PstSACB involved in phosphate import. Responsible for energy coupling to the transport system. The sequence is that of Phosphate import ATP-binding protein PstB from Bordetella pertussis (strain Tohama I / ATCC BAA-589 / NCTC 13251).